The chain runs to 480 residues: Prostacyclin synthase (480 aa).

The chain crosses the membrane as a helical span at residues 1–21 (MMWTALLLVGLSILVIVLYGR). Residues Arg-104, Leu-110, Asn-277, 338-339 (TR), and Arg-362 each bind substrate. A heme-binding site is contributed by Cys-421.

Belongs to the cytochrome P450 family. It depends on heme as a cofactor.

The protein localises to the endoplasmic reticulum membrane. It catalyses the reaction prostaglandin H2 = prostaglandin I2. The catalysed reaction is a hydroperoxyeicosatetraenoate = an oxoeicosatetraenoate + H2O. The enzyme catalyses (15S)-hydroperoxy-(5Z,8Z,11Z,13E)-eicosatetraenoate = 15-oxo-(5Z,8Z,11Z,13E)-eicosatetraenoate + H2O. It carries out the reaction (15S)-hydroperoxy-(5Z,8Z,11Z,13E)-eicosatetraenoate + AH2 = (15S)-hydroxy-(5Z,8Z,11Z,13E)-eicosatetraenoate + A + H2O. Its function is as follows. Catalyzes the isomerization of prostaglandin H2 to prostacyclin (= prostaglandin I2). Functionally, catalyzes the biosynthesis and metabolism of eicosanoids. Catalyzes the isomerization of prostaglandin H2 to prostacyclin (= prostaglandin I2), a potent mediator of vasodilation and inhibitor of platelet aggregation. Additionally, displays dehydratase activity, toward hydroperoxyeicosatetraenoates (HPETEs), especially toward (15S)-hydroperoxy-(5Z,8Z,11Z,13E)-eicosatetraenoate (15(S)-HPETE). This chain is Prostacyclin synthase, found in Danio rerio (Zebrafish).